We begin with the raw amino-acid sequence, 89 residues long: MALDAAVKQSIIKDFATSEGDTGSPEVQVAVLTQRIKDLTEHMKEHKHDFHTQRGLLAMVGRRKRMLTYLKNTDINRYRALIERLGLRR.

The protein belongs to the universal ribosomal protein uS15 family. Part of the 30S ribosomal subunit. Forms a bridge to the 50S subunit in the 70S ribosome, contacting the 23S rRNA.

Functionally, one of the primary rRNA binding proteins, it binds directly to 16S rRNA where it helps nucleate assembly of the platform of the 30S subunit by binding and bridging several RNA helices of the 16S rRNA. Its function is as follows. Forms an intersubunit bridge (bridge B4) with the 23S rRNA of the 50S subunit in the ribosome. The protein is Small ribosomal subunit protein uS15 of Arthrobacter sp. (strain FB24).